The sequence spans 631 residues: 1-deoxy-D-xylulose-5-phosphate synthase (631 aa).

Thiamine diphosphate contacts are provided by residues His-87 and 128 to 130 (GHS). Mg(2+) is bound at residue Asp-159. Residues 160 to 161 (GA), Asn-188, Phe-295, and Glu-377 each bind thiamine diphosphate. Residue Asn-188 coordinates Mg(2+).

Belongs to the transketolase family. DXPS subfamily. As to quaternary structure, homodimer. Mg(2+) serves as cofactor. The cofactor is thiamine diphosphate.

It carries out the reaction D-glyceraldehyde 3-phosphate + pyruvate + H(+) = 1-deoxy-D-xylulose 5-phosphate + CO2. Its pathway is metabolic intermediate biosynthesis; 1-deoxy-D-xylulose 5-phosphate biosynthesis; 1-deoxy-D-xylulose 5-phosphate from D-glyceraldehyde 3-phosphate and pyruvate: step 1/1. Functionally, catalyzes the acyloin condensation reaction between C atoms 2 and 3 of pyruvate and glyceraldehyde 3-phosphate to yield 1-deoxy-D-xylulose-5-phosphate (DXP). The sequence is that of 1-deoxy-D-xylulose-5-phosphate synthase from Pseudomonas putida (strain W619).